A 157-amino-acid chain; its full sequence is Selenoprotein F (157 aa).

An N-terminal signal peptide occupies residues 1 to 19; sequence MSGEVYILWLLSLIQTLSA. A non-standard amino acid (selenocysteine) is located at residue Sec84.

Belongs to the selenoprotein M/F family. As to expression, expressed in the brain, liver and retina. Localized to the retinal ganglion cell layer, the inner nuclear layer and the outer nuclear layer at both parr and smolt stages.

Its subcellular location is the endoplasmic reticulum lumen. In terms of biological role, may be involved in redox reactions associated with the formation of disulfide bonds. May contribute to the quality control of protein folding in the endoplasmic reticulum. May be involved in retinal development. In Oncorhynchus mykiss (Rainbow trout), this protein is Selenoprotein F.